The sequence spans 541 residues: Chaperonin GroEL (541 aa).

Residues 29-32, 86-90, glycine 413, 478-480, and aspartate 494 contribute to the ATP site; these read TLGP, DGTTT, and NAA.

Belongs to the chaperonin (HSP60) family. Forms a cylinder of 14 subunits composed of two heptameric rings stacked back-to-back. Interacts with the co-chaperonin GroES.

The protein localises to the cytoplasm. The enzyme catalyses ATP + H2O + a folded polypeptide = ADP + phosphate + an unfolded polypeptide.. Its function is as follows. Together with its co-chaperonin GroES, plays an essential role in assisting protein folding. The GroEL-GroES system forms a nano-cage that allows encapsulation of the non-native substrate proteins and provides a physical environment optimized to promote and accelerate protein folding. The sequence is that of Chaperonin GroEL from Agathobacter rectalis (strain ATCC 33656 / DSM 3377 / JCM 17463 / KCTC 5835 / VPI 0990) (Eubacterium rectale).